We begin with the raw amino-acid sequence, 380 residues long: Cytochrome b (380 aa).

4 consecutive transmembrane segments (helical) span residues 33–53 (FGSL…FLAM), 77–98 (WLIR…YLHI), 113–133 (WNVG…GYVL), and 178–198 (FFAF…IHLI). Heme b contacts are provided by His83 and His97. Heme b is bound by residues His182 and His196. Residue His201 participates in a ubiquinone binding. Helical transmembrane passes span 226–246 (YKDL…ALFS), 288–308 (LGGV…PILH), 320–340 (FSQF…WIGG), and 347–367 (FVII…VMIP).

The protein belongs to the cytochrome b family. In terms of assembly, the cytochrome bc1 complex contains 3 respiratory subunits (MT-CYB, CYC1 and UQCRFS1), 2 core proteins (UQCRC1 and UQCRC2) and probably 6 low-molecular weight proteins. It depends on heme b as a cofactor.

The protein resides in the mitochondrion inner membrane. Functionally, component of the ubiquinol-cytochrome c reductase complex (complex III or cytochrome b-c1 complex) that is part of the mitochondrial respiratory chain. The b-c1 complex mediates electron transfer from ubiquinol to cytochrome c. Contributes to the generation of a proton gradient across the mitochondrial membrane that is then used for ATP synthesis. The chain is Cytochrome b (mt-cyb) from Paralichthys olivaceus (Bastard halibut).